Here is a 247-residue protein sequence, read N- to C-terminus: Tyrosine recombinase XerD-like (247 aa).

In terms of domain architecture, Core-binding (CB) spans M1–Y72. The region spanning S91–L247 is the Tyr recombinase domain. R212 is a catalytic residue. Y244 (O-(3'-phospho-DNA)-tyrosine intermediate) is an active-site residue.

The protein belongs to the 'phage' integrase family. XerD-like subfamily.

Its subcellular location is the cytoplasm. Functionally, putative tyrosine recombinase. Not involved in the cutting and rejoining of the recombining DNA molecules on dif(SL) site. In Streptococcus uberis (strain ATCC BAA-854 / 0140J), this protein is Tyrosine recombinase XerD-like.